The following is a 351-amino-acid chain: Vacuolar protein sorting-associated protein 72 homolog (351 aa).

The segment at 1–136 (MAASRSRRNN…DSGRKSIRTS (136 aa)) is disordered. Positions 36–72 (QEDEEDKEYEQKDEEEDVVDSDFSIDENDEPVSDQEE) are enriched in acidic residues. A phosphoserine mark is found at serine 56, serine 59, and serine 68. The segment covering 87–100 (AYKETKPAVKKETK) has biased composition (basic and acidic residues). A compositionally biased stretch (basic residues) spans 105–121 (LHKKRPGGGVTKRRPRP). Residues 142–202 (QATKIRLKEL…QKMELEKKKS (61 aa)) adopt a coiled-coil conformation. A DNA-binding region spans residues 156 to 208 (KRKKKKVRVEDYMPTQEELLEEAKITEEENTKSLEKFQKMELEKKKSRPTKRT).

It belongs to the VPS72/YL1 family. In terms of assembly, interacts with H2AV. Component of the Tip60 chromatin-remodeling complex which contains the catalytic subunit Tip60 and the subunits Domino, Tra1, Brd8, E(Pc), DMAP1, Pontin, Reptin, Ing3, Act87E, BAP55, Mrg15, MrgBP, Gas41 and YL-1.

The protein resides in the nucleus. Its function is as follows. Part of the Tip60 chromatin-remodeling complex which is involved in DNA repair. Upon induction of DNA double-strand breaks, this complex acetylates phosphorylated H2AV in nucleosomes and exchanges it with unmodified H2AV. This chain is Vacuolar protein sorting-associated protein 72 homolog (YL-1), found in Drosophila melanogaster (Fruit fly).